We begin with the raw amino-acid sequence, 257 residues long: Ribonuclease HII (257 aa).

The RNase H type-2 domain occupies 72 to 257; the sequence is TYIAGIDEVG…FAPIKDMIQK (186 aa). 3 residues coordinate a divalent metal cation: Asp-78, Glu-79, and Asp-170.

The protein belongs to the RNase HII family. It depends on Mn(2+) as a cofactor. The cofactor is Mg(2+).

The protein localises to the cytoplasm. It catalyses the reaction Endonucleolytic cleavage to 5'-phosphomonoester.. Endonuclease that specifically degrades the RNA of RNA-DNA hybrids. The chain is Ribonuclease HII from Bacillus thuringiensis (strain Al Hakam).